Reading from the N-terminus, the 433-residue chain is Protein translocase subunit SecY (433 aa).

The next 10 helical transmembrane spans lie at 17-37 (IIFT…PIPG), 71-91 (IFAL…LMSV), 117-137 (LTVL…ESMV), 141-161 (GPVV…TLVV), 184-204 (LIIF…MFEL), 212-232 (PLIA…IIFF), 268-288 (GVIP…LANF), 310-330 (YILL…AIVF), 366-386 (LTVI…LLMN), and 388-408 (YVIS…VVLD).

Belongs to the SecY/SEC61-alpha family. Component of the Sec protein translocase complex. Heterotrimer consisting of SecY, SecE and SecG subunits. The heterotrimers can form oligomers, although 1 heterotrimer is thought to be able to translocate proteins. Interacts with the ribosome. Interacts with SecDF, and other proteins may be involved. Interacts with SecA.

The protein localises to the cell inner membrane. The central subunit of the protein translocation channel SecYEG. Consists of two halves formed by TMs 1-5 and 6-10. These two domains form a lateral gate at the front which open onto the bilayer between TMs 2 and 7, and are clamped together by SecE at the back. The channel is closed by both a pore ring composed of hydrophobic SecY resides and a short helix (helix 2A) on the extracellular side of the membrane which forms a plug. The plug probably moves laterally to allow the channel to open. The ring and the pore may move independently. The sequence is that of Protein translocase subunit SecY from Rickettsia typhi (strain ATCC VR-144 / Wilmington).